The following is a 294-amino-acid chain: Shikimate dehydrogenase (NADP(+)) (294 aa).

Shikimate-binding positions include 25–27 (SAS) and Thr-72. Lys-76 acts as the Proton acceptor in catalysis. Positions 97 and 112 each coordinate shikimate. NADP(+) contacts are provided by residues 136-140 (GAGGA) and Thr-234. Tyr-236 provides a ligand contact to shikimate. An NADP(+)-binding site is contributed by Gly-257.

This sequence belongs to the shikimate dehydrogenase family. Homodimer.

The catalysed reaction is shikimate + NADP(+) = 3-dehydroshikimate + NADPH + H(+). The protein operates within metabolic intermediate biosynthesis; chorismate biosynthesis; chorismate from D-erythrose 4-phosphate and phosphoenolpyruvate: step 4/7. In terms of biological role, involved in the biosynthesis of the chorismate, which leads to the biosynthesis of aromatic amino acids. Catalyzes the reversible NADPH linked reduction of 3-dehydroshikimate (DHSA) to yield shikimate (SA). This is Shikimate dehydrogenase (NADP(+)) from Symbiobacterium thermophilum (strain DSM 24528 / JCM 14929 / IAM 14863 / T).